The primary structure comprises 150 residues: Dynein light chain Tctex-type protein 2B (150 aa).

Belongs to the dynein light chain Tctex-type family.

It is found in the dynein axonemal particle. In terms of biological role, acts as one of several non-catalytic accessory components of the cytoplasmic dynein 2 complex (dynein-2 complex), a motor protein complex that drives the movement of cargos along microtubules within cilia and flagella in concert with the intraflagellar transport (IFT) system. Required for proper retrograde ciliary transport. The chain is Dynein light chain Tctex-type protein 2B (dynlt2b) from Danio rerio (Zebrafish).